A 375-amino-acid chain; its full sequence is F-box/kelch-repeat protein At4g39580 (375 aa).

Positions 20–66 (PTTNLFLPDDILLSSLSRISRLYYPTFSLVSKSFRSLIASPELYQTR) constitute an F-box domain. 3 Kelch repeats span residues 132–178 (NIYA…VLDG), 179–225 (KIYV…KSVG), and 229–269 (KYHL…VINN).

This Arabidopsis thaliana (Mouse-ear cress) protein is F-box/kelch-repeat protein At4g39580.